Here is a 360-residue protein sequence, read N- to C-terminus: Inward rectifier potassium channel 13 (360 aa).

Over 1–50 the chain is Cytoplasmic; it reads MDSRNCKVNAPLLSQRYRRMVTKDGHSTLQMDGAQRGLVYLRDAWGILMD. The helical transmembrane segment at 51-77 threads the bilayer; that stretch reads MRWRWMMLVFSASFVVHWLVFAVLWYA. The Extracellular portion of the chain corresponds to 78-105; that stretch reads VAEMNGDLEIDHDVPPENHTICVKHITS. The helical; Pore-forming intramembrane region spans 106-122; it reads FTAAFSFSLETQLTIGY. Positions 119-124 match the Selectivity filter motif; sequence TIGYGT. Topologically, residues 123–131 are extracellular; sequence GTMFPSGDC. Residues 132–157 form a helical membrane-spanning segment; the sequence is PSAIALLAIQMLLGLMLEAFITGAFV. Residues 158-360 lie on the Cytoplasmic side of the membrane; it reads AKIARPKNRA…FQIAETGLTE (203 aa). A Phosphoserine; by PKC modification is found at Ser-201. The residue at position 287 (Ser-287) is a Phosphoserine; by PKA.

The protein belongs to the inward rectifier-type potassium channel (TC 1.A.2.1) family. KCNJ13 subfamily. In terms of assembly, homotetramer. Interacts with RAB28; the interaction may facilitate cone outer segments phagocytosis. Post-translationally, phosphorylation at Ser-201 by PKC strongly inhibits ionic currents, while phosphorylation at Ser-287 by PKA increases them.

It localises to the membrane. The protein resides in the cell membrane. The enzyme catalyses K(+)(in) = K(+)(out). Inhibited by Ba(2+) and Cs(+), although sensitivity to those inhibitors is much lower than in other Kir channels. In terms of biological role, inward rectifier potassium channels are characterized by a greater tendency to allow potassium to flow into the cell rather than out of it. Their voltage dependence is regulated by the concentration of extracellular potassium; as external potassium is raised, the voltage range of the channel opening shifts to more positive voltages. The inward rectification is mainly due to the blockage of outward current by internal magnesium. KCNJ13 has a very low single channel conductance, low sensitivity to block by external barium and cesium, and no dependence of its inward rectification properties on the internal blocking particle magnesium. This Rattus norvegicus (Rat) protein is Inward rectifier potassium channel 13 (Kcnj13).